A 331-amino-acid polypeptide reads, in one-letter code: tRNA N6-adenosine threonylcarbamoyltransferase (331 aa).

Fe cation-binding residues include His109, His113, and Tyr130. Substrate contacts are provided by residues 130–134, Asp162, Asp183, and Ser262; that span reads YLSGG. Fe cation is bound at residue Asp290.

This sequence belongs to the KAE1 / TsaD family. Fe(2+) serves as cofactor.

The protein localises to the cytoplasm. The enzyme catalyses L-threonylcarbamoyladenylate + adenosine(37) in tRNA = N(6)-L-threonylcarbamoyladenosine(37) in tRNA + AMP + H(+). Its function is as follows. Required for the formation of a threonylcarbamoyl group on adenosine at position 37 (t(6)A37) in tRNAs that read codons beginning with adenine. Is probably involved in the transfer of the threonylcarbamoyl moiety of threonylcarbamoyl-AMP (TC-AMP) to the N6 group of A37. The chain is tRNA N6-adenosine threonylcarbamoyltransferase from Metallosphaera sedula (strain ATCC 51363 / DSM 5348 / JCM 9185 / NBRC 15509 / TH2).